The chain runs to 378 residues: MTRNGIGIRTAQVRSERLTGQIHVYDGVGKGKSQAALGVVLRSIGLGINAPNNSNRVLLLRFLKGPERDYDEDGAIAALQRGFPHLIDQVRTGRAEFFGPEEITTFDRSEAGRGWDVAKGAIASGLYSVVVLDEINPVLDLGLLSVDEVVGTLKSKPQELEIIATGRGAPQKLLDIADLHSEMKPLHHPKATELLMTGIEIYTGAGKGKSTSALGKALQAIGRGINHPGSTRVLIMQWLKGGSGYTEDAAISALRQSYPEVVDHQRCGRDAIVWRNSRQELDYVEAERGWEIAKVAIASGLYKTIILDELNPTVDLELLPVEPIVQALLRKPRDTEIIITGRCQNQPAYFDLASIHSEVYCHKHYANQGVELKRGVDF.

This is an uncharacterized protein from Nostoc sp. (strain PCC 7120 / SAG 25.82 / UTEX 2576).